We begin with the raw amino-acid sequence, 458 residues long: Kelch repeat and BTB domain-containing protein 13 (458 aa).

The region spanning 7–74 (TLVQVWVGGQ…LRGDRPALAA (68 aa)) is the BTB domain. Kelch repeat units lie at residues 159 to 209 (AVST…TLGN), 210 to 258 (KLYI…GFDG), 259 to 305 (RLYA…QACG), 307 to 350 (LFVC…VAHR), and 352 to 400 (SLYV…VVRG).

Component of the BCR(KBTBD13) E3 ubiquitin ligase complex, at least composed of CUL3 and KBTBD13 and RBX1. Interacts with CUL3. Autoubiquitinated. As to expression, expressed in skeletal muscle.

Its subcellular location is the cytoplasm. It functions in the pathway protein modification; protein ubiquitination. Substrate-specific adapter of a BCR (BTB-CUL3-RBX1) E3 ubiquitin ligase complex. This chain is Kelch repeat and BTB domain-containing protein 13 (KBTBD13), found in Homo sapiens (Human).